We begin with the raw amino-acid sequence, 292 residues long: Ribosomal protein L11 methyltransferase (292 aa).

S-adenosyl-L-methionine-binding residues include Thr-145, Gly-166, Asp-188, and Asn-229.

The protein belongs to the methyltransferase superfamily. PrmA family.

The protein localises to the cytoplasm. The enzyme catalyses L-lysyl-[protein] + 3 S-adenosyl-L-methionine = N(6),N(6),N(6)-trimethyl-L-lysyl-[protein] + 3 S-adenosyl-L-homocysteine + 3 H(+). In terms of biological role, methylates ribosomal protein L11. In Alteromonas mediterranea (strain DSM 17117 / CIP 110805 / LMG 28347 / Deep ecotype), this protein is Ribosomal protein L11 methyltransferase.